The following is a 485-amino-acid chain: MKFIIKLFPEITIKSKSVRQRMVKILQGNIRNVLQKVDETVTVRNDWDKLMVSSKNDSPENRDKLVERLSCMPGIQAFLEVTQVPFTDLHDIYEQTAAVYGPTLANKTFCVRVKRKGKHEFTSIEIERYVGGGLNQNFPSNGVRLSHPDLQINLQIENELLYLVTAIHKGLGGYPLSTQEDVLSLISGGFDSGVASYLFIKRGSRVHYCFFNLGGAAHEIGVKQVAYYLWSKYSQSHKVKFVSVPFEPVVGEILEKIDNGLMGVVLKRMMMRAASRVAERMGVEALVTGESVGQVSSQTVTNLSVIDRVTDTLILRPLIVSDKQDIIDQARAIGTQEFAETMPEYCGVISNKPTVKARYEEVLANEAKFNFDVLENVITSAKVIDIREIANETEAQVQEVETTSALAENEVILDIRSPDEHEDKPFNPEGMTVIHLPFYKLSTQFGDLDQSKTYLLYCERGVMSKLQALYLKEQGFNNIKVYRQN.

In terms of domain architecture, THUMP spans 63 to 167 (DKLVERLSCM…NELLYLVTAI (105 aa)). ATP contacts are provided by residues 185–186 (LI), K267, G289, and Q298. Residues C346 and C458 are joined by a disulfide bond. Positions 406–485 (LAENEVILDI…FNNIKVYRQN (80 aa)) constitute a Rhodanese domain. The Cysteine persulfide intermediate role is filled by C458.

It belongs to the ThiI family.

It is found in the cytoplasm. The enzyme catalyses [ThiI sulfur-carrier protein]-S-sulfanyl-L-cysteine + a uridine in tRNA + 2 reduced [2Fe-2S]-[ferredoxin] + ATP + H(+) = [ThiI sulfur-carrier protein]-L-cysteine + a 4-thiouridine in tRNA + 2 oxidized [2Fe-2S]-[ferredoxin] + AMP + diphosphate. The catalysed reaction is [ThiS sulfur-carrier protein]-C-terminal Gly-Gly-AMP + S-sulfanyl-L-cysteinyl-[cysteine desulfurase] + AH2 = [ThiS sulfur-carrier protein]-C-terminal-Gly-aminoethanethioate + L-cysteinyl-[cysteine desulfurase] + A + AMP + 2 H(+). The protein operates within cofactor biosynthesis; thiamine diphosphate biosynthesis. In terms of biological role, catalyzes the ATP-dependent transfer of a sulfur to tRNA to produce 4-thiouridine in position 8 of tRNAs, which functions as a near-UV photosensor. Also catalyzes the transfer of sulfur to the sulfur carrier protein ThiS, forming ThiS-thiocarboxylate. This is a step in the synthesis of thiazole, in the thiamine biosynthesis pathway. The sulfur is donated as persulfide by IscS. The polypeptide is tRNA sulfurtransferase (Tolumonas auensis (strain DSM 9187 / NBRC 110442 / TA 4)).